We begin with the raw amino-acid sequence, 448 residues long: Putative F-box/LRR-repeat protein At5g25860 (448 aa).

An F-box domain is found at 11–58; that stretch reads RDAVNCLPDEILAKILSYLPTKRAVSTSLISKRWRNLFALMIQLFESQ. LRR repeat units follow at residues 82-106, 185-214, 215-240, 310-341, and 342-367; these read QESF…SILC, FLHA…FLHD, LRGY…TVHF, TLSL…YFES, and NEKE…VLKG.

This Arabidopsis thaliana (Mouse-ear cress) protein is Putative F-box/LRR-repeat protein At5g25860.